Reading from the N-terminus, the 144-residue chain is Granulocyte-macrophage colony-stimulating factor (144 aa).

The first 17 residues, 1 to 17, serve as a signal peptide directing secretion; that stretch reads MWLQNLLLLGTVVCSFS. O-linked (GalNAc...) serine glycosylation is present at S24. A glycan (O-linked (GalNAc...) threonine) is linked at T27. 2 N-linked (GlcNAc...) asparagine glycosylation sites follow: N44 and N54. Cystine bridges form between C71–C113 and C105–C138.

The protein belongs to the GM-CSF family. Monomer. The signaling GM-CSF receptor complex is a dodecamer of two head-to-head hexamers of two alpha, two beta, and two ligand subunits.

The protein localises to the secreted. Cytokine that stimulates the growth and differentiation of hematopoietic precursor cells from various lineages, including granulocytes, macrophages, eosinophils and erythrocytes. In Cervus elaphus (Red deer), this protein is Granulocyte-macrophage colony-stimulating factor (CSF2).